Consider the following 77-residue polypeptide: MDPIILAEINGNIATVGYGLAAIGPGIGVGIVAGKTVEAMARQPEMAGSLRTTMFLGIAFSEALALIGLATYFIFTN.

Helical transmembrane passes span 13–33 (IATV…GIVA) and 55–75 (FLGI…YFIF).

The protein belongs to the ATPase C chain family. In terms of assembly, F-type ATPases have 2 components, F(1) - the catalytic core - and F(0) - the membrane proton channel. F(1) has five subunits: alpha(3), beta(3), gamma(1), delta(1), epsilon(1). F(0) has three main subunits: a(1), b(2) and c(10-14). The alpha and beta chains form an alternating ring which encloses part of the gamma chain. F(1) is attached to F(0) by a central stalk formed by the gamma and epsilon chains, while a peripheral stalk is formed by the delta and b chains.

Its subcellular location is the cell membrane. Its function is as follows. F(1)F(0) ATP synthase produces ATP from ADP in the presence of a proton or sodium gradient. F-type ATPases consist of two structural domains, F(1) containing the extramembraneous catalytic core and F(0) containing the membrane proton channel, linked together by a central stalk and a peripheral stalk. During catalysis, ATP synthesis in the catalytic domain of F(1) is coupled via a rotary mechanism of the central stalk subunits to proton translocation. In terms of biological role, key component of the F(0) channel; it plays a direct role in translocation across the membrane. A homomeric c-ring of between 10-14 subunits forms the central stalk rotor element with the F(1) delta and epsilon subunits. The protein is ATP synthase subunit c of Clavibacter michiganensis subsp. michiganensis (strain NCPPB 382).